A 233-amino-acid polypeptide reads, in one-letter code: Probable F-box protein At3g56670 (233 aa).

The 48-residue stretch at 22-69 folds into the F-box domain; it reads HGGVIDIPLNTDSGVTKNTPGEIALLRFKSVSKLWSSIISSRRDFIES.

This chain is Probable F-box protein At3g56670, found in Arabidopsis thaliana (Mouse-ear cress).